Reading from the N-terminus, the 177-residue chain is Insertion element IS1223 uncharacterized 20.7 kDa protein (177 aa).

The disordered stretch occupies residues 112-131 (KQKGRPRKVPKKSKKTTKKL). The segment covering 113 to 128 (QKGRPRKVPKKSKKTT) has biased composition (basic residues).

The protein belongs to the IS150/IS1296 orfA family.

In Lactobacillus johnsonii, this protein is Insertion element IS1223 uncharacterized 20.7 kDa protein.